The primary structure comprises 304 residues: Type II restriction enzyme LlaDCHI (304 aa).

Belongs to the DpnII type II restriction endonuclease family.

The enzyme catalyses Endonucleolytic cleavage of DNA to give specific double-stranded fragments with terminal 5'-phosphates.. Functionally, a P subtype restriction enzyme that recognizes the double-stranded unmethylated sequence 5'-GATC-3' and cleaves before G-1. This chain is Type II restriction enzyme LlaDCHI (llaDCHIR), found in Lactococcus lactis subsp. cremoris (Streptococcus cremoris).